Consider the following 100-residue polypeptide: Small ribosomal subunit protein eS24 (100 aa).

It belongs to the eukaryotic ribosomal protein eS24 family.

The polypeptide is Small ribosomal subunit protein eS24 (Methanothermobacter thermautotrophicus (strain ATCC 29096 / DSM 1053 / JCM 10044 / NBRC 100330 / Delta H) (Methanobacterium thermoautotrophicum)).